Here is a 52-residue protein sequence, read N- to C-terminus: UPF0057 membrane protein YqaE (52 aa).

A run of 2 helical transmembrane segments spans residues 1 to 21 (MGFW…LLGK) and 23 to 43 (FGWA…PGLI).

This sequence belongs to the UPF0057 (PMP3) family.

It is found in the cell membrane. The chain is UPF0057 membrane protein YqaE (yqaE) from Escherichia coli O157:H7.